A 509-amino-acid chain; its full sequence is uncharacterized protein (509 aa).

A run of 13 helical transmembrane segments spans residues S14–P34, T117–I137, E158–I178, I188–F208, L209–S229, I240–W260, L303–G323, W324–S344, A359–L379, M399–V419, S423–P443, M458–F478, and F484–V504.

This sequence to E.coli YfcC. The protein to B.subtilis YcgA.

It is found in the cell membrane. This is an uncharacterized protein from Haemophilus influenzae (strain ATCC 51907 / DSM 11121 / KW20 / Rd).